The chain runs to 253 residues: 3-deoxy-manno-octulosonate cytidylyltransferase (253 aa).

Belongs to the KdsB family.

The protein localises to the cytoplasm. It catalyses the reaction 3-deoxy-alpha-D-manno-oct-2-ulosonate + CTP = CMP-3-deoxy-beta-D-manno-octulosonate + diphosphate. The protein operates within nucleotide-sugar biosynthesis; CMP-3-deoxy-D-manno-octulosonate biosynthesis; CMP-3-deoxy-D-manno-octulosonate from 3-deoxy-D-manno-octulosonate and CTP: step 1/1. It participates in bacterial outer membrane biogenesis; lipopolysaccharide biosynthesis. Activates KDO (a required 8-carbon sugar) for incorporation into bacterial lipopolysaccharide in Gram-negative bacteria. This is 3-deoxy-manno-octulosonate cytidylyltransferase from Proteus mirabilis (strain HI4320).